Reading from the N-terminus, the 534-residue chain is uncharacterized protein (534 aa).

Disordered stretches follow at residues 1–150, 252–284, and 383–434; these read MSDS…DIPP, RRFRRREDNERNNSNSPRNFSTHGNGNGENGQP, and WKSQ…PSLP. Residues 8–67 are compositionally biased toward basic and acidic residues; the sequence is SQREDNYSRDRRSRFTEDSYSRRDSQRSGNEAPRESRYYRKEEHLQERSRSRSPARDSRW. Polar residues predominate over residues 102 to 113; that stretch reads SLQSTKATSSRT. Residues 130 to 141 show a composition bias toward pro residues; it reads PSAPAPPLPPSS. A compositionally biased stretch (basic and acidic residues) spans 252–262; the sequence is RRFRRREDNER. Positions 263-272 are enriched in low complexity; the sequence is NNSNSPRNFS. Over residues 393 to 408 the composition is skewed to polar residues; the sequence is NQGNRAYNPPNRNQAF.

This is an uncharacterized protein from Schizosaccharomyces pombe (strain 972 / ATCC 24843) (Fission yeast).